The sequence spans 393 residues: Bone morphogenetic protein 2 (393 aa).

A signal peptide spans 1–19 (MVAGTRCLLVLLLPQVLLG). The propeptide at 20–279 (GAAGLIPELG…GHPLHKREKR (260 aa)) is cleaved by PCSK5. Serine 85 carries the phosphoserine modification. Residues asparagine 133, asparagine 161, and asparagine 197 are each glycosylated (N-linked (GlcNAc...) asparagine). The disordered stretch occupies residues 268-290 (GKGHPLHKREKRQAKHKQRKRLK). Over residues 271 to 290 (HPLHKREKRQAKHKQRKRLK) the composition is skewed to basic residues. 3 cysteine pairs are disulfide-bonded: cysteine 293–cysteine 358, cysteine 322–cysteine 390, and cysteine 326–cysteine 392. A glycan (N-linked (GlcNAc...) asparagine) is linked at asparagine 335.

The protein belongs to the TGF-beta family. As to quaternary structure, homodimer; disulfide-linked. Interacts with SOSTDC1. Interacts with GREM2, RGMA, RGMB and RGMC. Interacts with ASPN. Interacts with MAFP5. Interacts with FBN1 (via N-terminal domain) and FBN2. Interacts with type I receptor BMPR1A. Interacts with type II receptor BMPR2. Interacts with SCUBE3. Interacts with TNFAIP6 (primarily via Link domain); this interaction is inhibited by hyaluronan. Interacts with ERFE. Interacts with BMPR1A/ALK3; the interaction may induce HAMP expression. Forms heterodimers with BMP6 in vitro; the heterodimer then binds to its receptor BMPR1A /ALK3 and may induce HAMP expression. Interacts with TGFBR3. Expressed in femur, calvaria, trachea, lung and ovary.

The protein localises to the secreted. In terms of biological role, growth factor of the TGF-beta superfamily that plays essential roles in many developmental processes, including cardiogenesis, neurogenesis, and osteogenesis. Induces cartilage and bone formation. Initiates the canonical BMP signaling cascade by associating with type I receptor BMPR1A and type II receptor BMPR2. Once all three components are bound together in a complex at the cell surface, BMPR2 phosphorylates and activates BMPR1A. In turn, BMPR1A propagates signal by phosphorylating SMAD1/5/8 that travel to the nucleus and act as activators and repressors of transcription of target genes. Also acts to promote expression of HAMP, via the interaction with its receptor BMPR1A/ALK3. Can also signal through non-canonical pathways such as ERK/MAP kinase signaling cascade that regulates osteoblast differentiation. Also stimulates the differentiation of myoblasts into osteoblasts via the EIF2AK3-EIF2A-ATF4 pathway by stimulating EIF2A phosphorylation which leads to increased expression of ATF4 which plays a central role in osteoblast differentiation. Acts as a positive regulator of odontoblast differentiation during mesenchymal tooth germ formation, expression is repressed during the bell stage by MSX1-mediated inhibition of CTNNB1 signaling. This Rattus norvegicus (Rat) protein is Bone morphogenetic protein 2 (Bmp2).